The following is a 544-amino-acid chain: Chaperonin GroEL (544 aa).

Residues 30–33 (TLGP), Lys-51, 87–91 (DGTTT), Gly-415, and Asp-495 each bind ATP.

The protein belongs to the chaperonin (HSP60) family. Forms a cylinder of 14 subunits composed of two heptameric rings stacked back-to-back. Interacts with the co-chaperonin GroES.

It localises to the cytoplasm. It catalyses the reaction ATP + H2O + a folded polypeptide = ADP + phosphate + an unfolded polypeptide.. Together with its co-chaperonin GroES, plays an essential role in assisting protein folding. The GroEL-GroES system forms a nano-cage that allows encapsulation of the non-native substrate proteins and provides a physical environment optimized to promote and accelerate protein folding. This Neisseria meningitidis serogroup A / serotype 4A (strain DSM 15465 / Z2491) protein is Chaperonin GroEL.